We begin with the raw amino-acid sequence, 598 residues long: NADH-quinone oxidoreductase subunit C/D (598 aa).

Residues 1–189 (MTDLTTSDSL…DPYVLTKQKE (189 aa)) are NADH dehydrogenase I subunit C. Residues 213–598 (DFMFLNLGPN…IDFVMSDVDR (386 aa)) are NADH dehydrogenase I subunit D.

It in the N-terminal section; belongs to the complex I 30 kDa subunit family. This sequence in the C-terminal section; belongs to the complex I 49 kDa subunit family. NDH-1 is composed of 13 different subunits. Subunits NuoB, CD, E, F, and G constitute the peripheral sector of the complex.

It is found in the cell inner membrane. The enzyme catalyses a quinone + NADH + 5 H(+)(in) = a quinol + NAD(+) + 4 H(+)(out). Functionally, NDH-1 shuttles electrons from NADH, via FMN and iron-sulfur (Fe-S) centers, to quinones in the respiratory chain. The immediate electron acceptor for the enzyme in this species is believed to be ubiquinone. Couples the redox reaction to proton translocation (for every two electrons transferred, four hydrogen ions are translocated across the cytoplasmic membrane), and thus conserves the redox energy in a proton gradient. The polypeptide is NADH-quinone oxidoreductase subunit C/D (Yersinia pestis bv. Antiqua (strain Angola)).